Reading from the N-terminus, the 265-residue chain is Expansin-like A2 (265 aa).

The first 21 residues, 1–21 (MLQGFLFLLSVVLLFSSSAAA), serve as a signal peptide directing secretion. Positions 42–148 (SGACAYGSMA…RRVPCDYGNK (107 aa)) constitute an Expansin-like EG45 domain. Residues N100 and N103 are each glycosylated (N-linked (GlcNAc...) asparagine). One can recognise an Expansin-like CBD domain in the interval 162 to 244 (NYLAIKLLYQ…NWEAGKSYDA (83 aa)).

The protein belongs to the expansin family. Expansin-like A subfamily.

Its subcellular location is the secreted. In Arabidopsis thaliana (Mouse-ear cress), this protein is Expansin-like A2 (EXLA2).